The sequence spans 398 residues: Probable peptidoglycan glycosyltransferase FtsW (398 aa).

At 1–25 (MCYGGTAMMAFADIKEALTPKPSAQ) the chain is on the cytoplasmic side. Residues 26–46 (LYDVPLLYCMLMLMGVGFVMV) form a helical membrane-spanning segment. The Periplasmic portion of the chain corresponds to 47 to 69 (TSASMPTADRLFGNIYHFTIRHG). A helical transmembrane segment spans residues 70–90 (IFLALSFCLFWITTSVPMSWW). Lys91 is a topological domain (cytoplasmic). Residues 92-112 (KANPYLLLVGLGLLLIVLIVG) traverse the membrane as a helical segment. Over 113–120 (REVNGSTR) the chain is Periplasmic. The chain crosses the membrane as a helical span at residues 121–141 (WIPIGPFNIQASELAKLFFFS). The Cytoplasmic portion of the chain corresponds to 142–156 (YISGYLVRKRSEVQE). The helical transmembrane segment at 157-177 (NIKGFIKPILVFAAYAGLILM) threads the bilayer. The Periplasmic segment spans residues 178–179 (QP). The helical transmembrane segment at 180-200 (DLGTVVVMFVTTVGLLFLAGA) threads the bilayer. A topological domain (cytoplasmic) is located at residue Lys201. Residues 202-222 (LWQFFVLILTGVALVIGLIVL) form a helical membrane-spanning segment. Residues 223–289 (EPYRMARVIG…DFIFAVIAEE (67 aa)) are Periplasmic-facing. A helical membrane pass occupies residues 290–312 (LGFVGVSSILIVLGTLVFRALLI). Topologically, residues 313-324 (GQNALKNGKEYE) are cytoplasmic. Residues 325-345 (GYLALAIGIWFAFQTMVNVGA) form a helical membrane-spanning segment. Over 346-356 (SAGILPTKGLT) the chain is Periplasmic. A helical transmembrane segment spans residues 357–377 (LPFISYGGSSLLMMTIAAGIL). Residues 378–398 (LRVDFETKMATKQATSGGAKR) are Cytoplasmic-facing.

Belongs to the SEDS family. FtsW subfamily.

Its subcellular location is the cell inner membrane. The catalysed reaction is [GlcNAc-(1-&gt;4)-Mur2Ac(oyl-L-Ala-gamma-D-Glu-L-Lys-D-Ala-D-Ala)](n)-di-trans,octa-cis-undecaprenyl diphosphate + beta-D-GlcNAc-(1-&gt;4)-Mur2Ac(oyl-L-Ala-gamma-D-Glu-L-Lys-D-Ala-D-Ala)-di-trans,octa-cis-undecaprenyl diphosphate = [GlcNAc-(1-&gt;4)-Mur2Ac(oyl-L-Ala-gamma-D-Glu-L-Lys-D-Ala-D-Ala)](n+1)-di-trans,octa-cis-undecaprenyl diphosphate + di-trans,octa-cis-undecaprenyl diphosphate + H(+). It functions in the pathway cell wall biogenesis; peptidoglycan biosynthesis. Functionally, peptidoglycan polymerase that is essential for cell division. The polypeptide is Probable peptidoglycan glycosyltransferase FtsW (Pseudoalteromonas translucida (strain TAC 125)).